The chain runs to 271 residues: NAD kinase (271 aa).

Aspartate 64 acts as the Proton acceptor in catalysis. Residues 64–65 (DG), arginine 69, 132–133 (NE), lysine 143, arginine 160, aspartate 162, 173–178 (TAYAMS), alanine 197, and glutamine 231 contribute to the NAD(+) site.

Belongs to the NAD kinase family. The cofactor is a divalent metal cation.

The protein localises to the cytoplasm. The catalysed reaction is NAD(+) + ATP = ADP + NADP(+) + H(+). Its function is as follows. Involved in the regulation of the intracellular balance of NAD and NADP, and is a key enzyme in the biosynthesis of NADP. Catalyzes specifically the phosphorylation on 2'-hydroxyl of the adenosine moiety of NAD to yield NADP. This is NAD kinase from Methanocorpusculum labreanum (strain ATCC 43576 / DSM 4855 / Z).